The chain runs to 435 residues: GTPase Der (435 aa).

2 EngA-type G domains span residues Lys4–Asp167 and Thr175–Ser350. Residues Gly10–Ser17, Asp57–Ile61, Asn119–Asp122, Gly181–Ser188, Asp228–Ile232, and Asn293–Asp296 contribute to the GTP site. One can recognise a KH-like domain in the interval Val351 to Lys435.

This sequence belongs to the TRAFAC class TrmE-Era-EngA-EngB-Septin-like GTPase superfamily. EngA (Der) GTPase family. Associates with the 50S ribosomal subunit.

Its function is as follows. GTPase that plays an essential role in the late steps of ribosome biogenesis. This chain is GTPase Der, found in Mycoplasma mycoides subsp. mycoides SC (strain CCUG 32753 / NCTC 10114 / PG1).